The sequence spans 126 residues: Holo-[acyl-carrier-protein] synthase (126 aa).

The Mg(2+) site is built by D9 and E58.

This sequence belongs to the P-Pant transferase superfamily. AcpS family. Mg(2+) is required as a cofactor.

It localises to the cytoplasm. It carries out the reaction apo-[ACP] + CoA = holo-[ACP] + adenosine 3',5'-bisphosphate + H(+). Its function is as follows. Transfers the 4'-phosphopantetheine moiety from coenzyme A to a Ser of acyl-carrier-protein. The protein is Holo-[acyl-carrier-protein] synthase of Vibrio atlanticus (strain LGP32) (Vibrio splendidus (strain Mel32)).